The sequence spans 468 residues: ATP synthase subunit beta (468 aa).

153–160 (GGAGVGKT) lines the ATP pocket.

It belongs to the ATPase alpha/beta chains family. In terms of assembly, F-type ATPases have 2 components, CF(1) - the catalytic core - and CF(0) - the membrane proton channel. CF(1) has five subunits: alpha(3), beta(3), gamma(1), delta(1), epsilon(1). CF(0) has three main subunits: a(1), b(2) and c(9-12). The alpha and beta chains form an alternating ring which encloses part of the gamma chain. CF(1) is attached to CF(0) by a central stalk formed by the gamma and epsilon chains, while a peripheral stalk is formed by the delta and b chains.

The protein resides in the cell inner membrane. It catalyses the reaction ATP + H2O + 4 H(+)(in) = ADP + phosphate + 5 H(+)(out). In terms of biological role, produces ATP from ADP in the presence of a proton gradient across the membrane. The catalytic sites are hosted primarily by the beta subunits. This chain is ATP synthase subunit beta, found in Nautilia profundicola (strain ATCC BAA-1463 / DSM 18972 / AmH).